Here is a 218-residue protein sequence, read N- to C-terminus: Ribose-5-phosphate isomerase A (218 aa).

Substrate is bound by residues 28-31 (TGST), 81-84 (DGAD), and 94-97 (KGGG). The active-site Proton acceptor is glutamate 103. Lysine 121 is a substrate binding site.

Belongs to the ribose 5-phosphate isomerase family. As to quaternary structure, homodimer.

The enzyme catalyses aldehydo-D-ribose 5-phosphate = D-ribulose 5-phosphate. It participates in carbohydrate degradation; pentose phosphate pathway; D-ribose 5-phosphate from D-ribulose 5-phosphate (non-oxidative stage): step 1/1. Functionally, catalyzes the reversible conversion of ribose-5-phosphate to ribulose 5-phosphate. This is Ribose-5-phosphate isomerase A from Thioalkalivibrio sulfidiphilus (strain HL-EbGR7).